The sequence spans 266 residues: Protein STAY-GREEN homolog, chloroplastic (266 aa).

The N-terminal 50 residues, 1-50 (MGTLTASLVAPSKLNPEKHSSLFVYKTRRKSHKNQSIVPVARLFGPAIFE), are a transit peptide targeting the chloroplast.

It belongs to the staygreen family.

Its subcellular location is the plastid. The protein resides in the chloroplast. Required to trigger chlorophyll degradation during leaf senescence and fruit ripening. The chain is Protein STAY-GREEN homolog, chloroplastic from Capsicum annuum (Capsicum pepper).